The sequence spans 391 residues: Formate-dependent phosphoribosylglycinamide formyltransferase (391 aa).

N(1)-(5-phospho-beta-D-ribosyl)glycinamide contacts are provided by residues 18 to 19 (EL) and Glu-78. ATP-binding positions include Arg-110, Lys-151, 156-161 (SSGKGQ), 191-194 (EEFI), and Glu-199. Residues 115–305 (DLASKDLKIK…EFELHLRAFL (191 aa)) form the ATP-grasp domain. 2 residues coordinate Mg(2+): Glu-264 and Glu-276. N(1)-(5-phospho-beta-D-ribosyl)glycinamide is bound by residues Asp-283, Lys-353, and 360–361 (RR).

It belongs to the PurK/PurT family. In terms of assembly, homodimer.

The enzyme catalyses N(1)-(5-phospho-beta-D-ribosyl)glycinamide + formate + ATP = N(2)-formyl-N(1)-(5-phospho-beta-D-ribosyl)glycinamide + ADP + phosphate + H(+). Its pathway is purine metabolism; IMP biosynthesis via de novo pathway; N(2)-formyl-N(1)-(5-phospho-D-ribosyl)glycinamide from N(1)-(5-phospho-D-ribosyl)glycinamide (formate route): step 1/1. In terms of biological role, involved in the de novo purine biosynthesis. Catalyzes the transfer of formate to 5-phospho-ribosyl-glycinamide (GAR), producing 5-phospho-ribosyl-N-formylglycinamide (FGAR). Formate is provided by PurU via hydrolysis of 10-formyl-tetrahydrofolate. This Prochlorococcus marinus (strain MIT 9301) protein is Formate-dependent phosphoribosylglycinamide formyltransferase.